The chain runs to 371 residues: Probable cysteine protease RDL5 (371 aa).

The signal sequence occupies residues 1 to 23; that stretch reads MGYAKSAMLIFLLALVIASCATA. The propeptide at 24–143 is activation peptide; it reads MDMSVVSSND…NRYKTSDGDV (120 aa). An N-linked (GlcNAc...) asparagine glycan is attached at asparagine 94. 3 disulfide bridges follow: cysteine 165-cysteine 206, cysteine 199-cysteine 239, and cysteine 298-cysteine 349. The active site involves cysteine 168. Residues histidine 304 and asparagine 324 contribute to the active site.

This sequence belongs to the peptidase C1 family. In terms of tissue distribution, expressed in roots, inflorescences and siliques.

Possesses protease activity in vitro. This Arabidopsis thaliana (Mouse-ear cress) protein is Probable cysteine protease RDL5.